The primary structure comprises 190 residues: Protein GrpE (190 aa).

The segment covering 1–31 has biased composition (basic and acidic residues); it reads MTEEQKKYEDAENLESKSENPEEASAEKSEN. A disordered region spans residues 1–39; sequence MTEEQKKYEDAENLESKSENPEEASAEKSENGVEDLQAE.

This sequence belongs to the GrpE family. Homodimer.

The protein localises to the cytoplasm. Its function is as follows. Participates actively in the response to hyperosmotic and heat shock by preventing the aggregation of stress-denatured proteins, in association with DnaK and GrpE. It is the nucleotide exchange factor for DnaK and may function as a thermosensor. Unfolded proteins bind initially to DnaJ; upon interaction with the DnaJ-bound protein, DnaK hydrolyzes its bound ATP, resulting in the formation of a stable complex. GrpE releases ADP from DnaK; ATP binding to DnaK triggers the release of the substrate protein, thus completing the reaction cycle. Several rounds of ATP-dependent interactions between DnaJ, DnaK and GrpE are required for fully efficient folding. This Zymomonas mobilis subsp. mobilis (strain ATCC 31821 / ZM4 / CP4) protein is Protein GrpE.